The sequence spans 454 residues: tRNA-2-methylthio-N(6)-dimethylallyladenosine synthase (454 aa).

Residues 6 to 122 (RRYHITTFGC…LQDLLQEVLA (117 aa)) form the MTTase N-terminal domain. [4Fe-4S] cluster contacts are provided by Cys-15, Cys-51, Cys-85, Cys-157, Cys-161, and Cys-164. One can recognise a Radical SAM core domain in the interval 143–380 (RESTVTAWVN…NHLVAIKAAE (238 aa)). The TRAM domain maps to 383-447 (QRYLGRIEEV…AFSLTGEPVK (65 aa)).

It belongs to the methylthiotransferase family. MiaB subfamily. In terms of assembly, monomer. [4Fe-4S] cluster is required as a cofactor.

The protein resides in the cytoplasm. It carries out the reaction N(6)-dimethylallyladenosine(37) in tRNA + (sulfur carrier)-SH + AH2 + 2 S-adenosyl-L-methionine = 2-methylsulfanyl-N(6)-dimethylallyladenosine(37) in tRNA + (sulfur carrier)-H + 5'-deoxyadenosine + L-methionine + A + S-adenosyl-L-homocysteine + 2 H(+). Its function is as follows. Catalyzes the methylthiolation of N6-(dimethylallyl)adenosine (i(6)A), leading to the formation of 2-methylthio-N6-(dimethylallyl)adenosine (ms(2)i(6)A) at position 37 in tRNAs that read codons beginning with uridine. In Gloeothece citriformis (strain PCC 7424) (Cyanothece sp. (strain PCC 7424)), this protein is tRNA-2-methylthio-N(6)-dimethylallyladenosine synthase.